A 669-amino-acid chain; its full sequence is Trissin receptor (669 aa).

Residues 1–15 (MIMTMMQTVRAWQQE) show a composition bias toward polar residues. The interval 1–90 (MIMTMMQTVR…PTGQQPPRLP (90 aa)) is disordered. Topologically, residues 1-184 (MIMTMMQTVR…EYIFDRTDVR (184 aa)) are extracellular. The span at 55-74 (NQNNGSPNSSPNQSTSAFRQ) shows a compositional bias: low complexity. Residue asparagine 66 is glycosylated (N-linked (GlcNAc...) asparagine). Positions 79–89 (HPPTGQQPPRL) are enriched in pro residues. 2 N-linked (GlcNAc...) asparagine glycosylation sites follow: asparagine 120 and asparagine 130. The chain crosses the membrane as a helical span at residues 185 to 205 (IIFITLYTLVFCCCFFGNLLV). At 206-217 (ILVVTLSRRLRS) the chain is on the cytoplasmic side. Residues 218–238 (ITNFFLANLAFADFCVGLFCV) form a helical membrane-spanning segment. At 239–269 (MQNLSIYLIESWVFGEFLCRMYQFVHSLSYT) the chain is on the extracellular side. An N-linked (GlcNAc...) asparagine glycan is attached at asparagine 241. Residues cysteine 257 and cysteine 340 are joined by a disulfide bond. Residues 270–290 (ASIFILVVICMERYFAIVHPI) traverse the membrane as a helical segment. The Cytoplasmic portion of the chain corresponds to 291 to 302 (TCKQILTAARLR). Residues 303–323 (MVIVTVWITSAVYSTPKFVFS) form a helical membrane-spanning segment. At 324 to 350 (KTIKNIHTQDGQEEEICVLDREMFNSK) the chain is on the extracellular side. A helical membrane pass occupies residues 351 to 371 (LLDMINFVLLYVMPLLVMTVL). Topologically, residues 372–552 (YSKIAIALWR…SSNVLRARRG (181 aa)) are cytoplasmic. Low complexity predominate over residues 390–401 (VVQHQHQQPQQP). 2 disordered regions span residues 390–481 (VVQH…RGVS) and 515–537 (AHHQRAGNASVGGGSGGAGAGAT). Residues 414–429 (MYHHHPHHHHHHHQHH) show a composition bias toward basic residues. The segment covering 441–454 (VGVGLGGGGGGGPG) has biased composition (gly residues). Low complexity predominate over residues 455 to 470 (PSLASGGSSTTSLSRK). A compositionally biased stretch (gly residues) spans 524-534 (SVGGGSGGAGA). Residues 553–573 (VVRMLIIFVLTFALCNLPYHA) traverse the membrane as a helical segment. At 574–595 (RKMWQYWSRSYRGDSNFNALLT) the chain is on the extracellular side. A helical transmembrane segment spans residues 596-616 (PLTFLVTYFNSGVNPLLYAFL). Over 617 to 669 (SRNFRKGMKELLLCSWKKGKGKSSSNSSMHHKRKALQTHSLPTDTTHIGNEQL) the chain is Cytoplasmic. A disordered region spans residues 635–669 (GKGKSSSNSSMHHKRKALQTHSLPTDTTHIGNEQL). A compositionally biased stretch (polar residues) spans 653–669 (QTHSLPTDTTHIGNEQL).

It belongs to the G-protein coupled receptor 1 family.

Its subcellular location is the cell membrane. Its function is as follows. G-protein coupled receptor which is activated by the Trissin peptide in vitro, leading to increased intracellular calcium ion levels. This is Trissin receptor from Drosophila melanogaster (Fruit fly).